Consider the following 406-residue polypeptide: Argininosuccinate synthase (406 aa).

ATP contacts are provided by residues alanine 13–serine 21 and alanine 40. L-citrulline contacts are provided by tyrosine 91 and serine 96. Glycine 121 contributes to the ATP binding site. L-aspartate is bound by residues threonine 123, asparagine 127, and aspartate 128. Asparagine 127 lines the L-citrulline pocket. L-citrulline-binding residues include arginine 131, serine 182, serine 191, glutamate 267, and tyrosine 279.

The protein belongs to the argininosuccinate synthase family. Type 1 subfamily. Homotetramer.

Its subcellular location is the cytoplasm. The enzyme catalyses L-citrulline + L-aspartate + ATP = 2-(N(omega)-L-arginino)succinate + AMP + diphosphate + H(+). It participates in amino-acid biosynthesis; L-arginine biosynthesis; L-arginine from L-ornithine and carbamoyl phosphate: step 2/3. The polypeptide is Argininosuccinate synthase (Brucella abortus (strain S19)).